Consider the following 375-residue polypeptide: Tryptophan--tRNA ligase (375 aa).

The short motif at 81–89 (PSGPVHIGH) is the 'HIGH' region element. A 'KMSKS' region motif is present at residues 258–262 (KMSAS).

Belongs to the class-I aminoacyl-tRNA synthetase family.

It localises to the cytoplasm. It catalyses the reaction tRNA(Trp) + L-tryptophan + ATP = L-tryptophyl-tRNA(Trp) + AMP + diphosphate + H(+). The chain is Tryptophan--tRNA ligase from Pyrobaculum aerophilum (strain ATCC 51768 / DSM 7523 / JCM 9630 / CIP 104966 / NBRC 100827 / IM2).